A 399-amino-acid chain; its full sequence is Methylthioribose kinase (399 aa).

ATP-binding positions include Asn-40, Lys-57, and 111-113; that span reads EDL. Asp-229 serves as a coordination point for substrate. 246–248 provides a ligand contact to ATP; the sequence is DAE. Arg-344 is a substrate binding site.

This sequence belongs to the methylthioribose kinase family. As to quaternary structure, homodimer.

It carries out the reaction 5-(methylsulfanyl)-D-ribose + ATP = 5-(methylsulfanyl)-alpha-D-ribose 1-phosphate + ADP + H(+). Its pathway is amino-acid biosynthesis; L-methionine biosynthesis via salvage pathway; S-methyl-5-thio-alpha-D-ribose 1-phosphate from S-methyl-5'-thioadenosine (hydrolase route): step 2/2. In terms of biological role, catalyzes the phosphorylation of methylthioribose into methylthioribose-1-phosphate. The chain is Methylthioribose kinase from Yersinia enterocolitica serotype O:8 / biotype 1B (strain NCTC 13174 / 8081).